Here is a 527-residue protein sequence, read N- to C-terminus: MPDIMPDDGLVLGLEGTAWNLSAALFGDDLVALHSSPYVPPKGGIHPREAAQHHASAMKEVVSRVLTEPERIRAVAFSQGPGLGPSLRTVATAARALSIALDVPLVGVNHCVAHVEIGRWATGFSDPIVLYASGANTQVLGYLNGRYRIFGETLDIGLGNGLDKFARSHDLPHPGGPAIERLAREGNYIELPYTVKGMDLAFSGLVSAAQESSAPLEDVCFGLQETAFAMCVEVTERALAHAGKDEVLLVGGVGANGRLQEMLRVMCEERGAAFAVPERTFLGDNGAMIAYTGKIMLEHGVVLPLDQSQIRPGYRADEVEVAWRTEPGEVFSIGPHEGGVARGAEAVVEIGEGNVIKRRTGKRYRYPALDRRLIAERTRAEARLIATARRAGVPTPVIRDITADTIVMERIKGEVLKYVTAPETIRLAGEAVGRLHGTGIVHGDLTTSNMIVRDGQCVLIDFGLASTSSEVESRGVDLHVFFQTLESTTENFQELKEAFVEGYTAVFPGAGEVLAREHEVELRGRYL.

The segment at 1–323 is kae1; it reads MPDIMPDDGL…YRADEVEVAW (323 aa). His110, His114, and Tyr131 together coordinate Fe cation. Residues 131–135, Asp163, Gly176, Glu180, and Asn256 contribute to the L-threonylcarbamoyladenylate site; that span reads YASGA. Position 284 (Asp284) interacts with Fe cation. The 195-residue stretch at 333-527 folds into the Protein kinase domain; the sequence is IGPHEGGVAR…HEVELRGRYL (195 aa). Residues 340–348 and Lys357 contribute to the ATP site; that span reads VARGAEAVV. Catalysis depends on Asp444, which acts as the Proton acceptor; for kinase activity.

The protein in the N-terminal section; belongs to the KAE1 / TsaD family. This sequence in the C-terminal section; belongs to the protein kinase superfamily. Tyr protein kinase family. BUD32 subfamily. As to quaternary structure, component of the KEOPS complex that consists of Kae1, Bud32, Cgi121 and Pcc1; the whole complex dimerizes. It depends on Fe(2+) as a cofactor.

The protein resides in the cytoplasm. It carries out the reaction L-seryl-[protein] + ATP = O-phospho-L-seryl-[protein] + ADP + H(+). The catalysed reaction is L-threonyl-[protein] + ATP = O-phospho-L-threonyl-[protein] + ADP + H(+). The enzyme catalyses L-threonylcarbamoyladenylate + adenosine(37) in tRNA = N(6)-L-threonylcarbamoyladenosine(37) in tRNA + AMP + H(+). Its function is as follows. Required for the formation of a threonylcarbamoyl group on adenosine at position 37 (t(6)A37) in tRNAs that read codons beginning with adenine. Is a component of the KEOPS complex that is probably involved in the transfer of the threonylcarbamoyl moiety of threonylcarbamoyl-AMP (TC-AMP) to the N6 group of A37. The Kae1 domain likely plays a direct catalytic role in this reaction. The Bud32 domain probably displays kinase activity that regulates Kae1 function. The protein is Probable bifunctional tRNA threonylcarbamoyladenosine biosynthesis protein of Methanoculleus marisnigri (strain ATCC 35101 / DSM 1498 / JR1).